The primary structure comprises 167 residues: Telethonin (167 aa).

The residue at position 39 (Ser-39) is a Phosphoserine. The segment at 144-167 is disordered; the sequence is VPVSKPGALRRSLSRSMSQEAQRG. Residues 157–167 show a composition bias toward polar residues; sequence SRSMSQEAQRG.

In terms of assembly, interacts with MYOZ1, MYOZ2 and MYOZ3. Interacts with CSRP3. Interacts directly with the N-terminal Ig-like domains of 2 titin (TTN) molecules. Interacts with ANKRD2; the interaction is direct. In terms of tissue distribution, heart and skeletal muscle.

It is found in the cytoplasm. Its subcellular location is the myofibril. The protein resides in the sarcomere. In terms of biological role, muscle assembly regulating factor. Mediates the antiparallel assembly of titin (TTN) molecules at the sarcomeric Z-disk. The protein is Telethonin (TCAP) of Homo sapiens (Human).